Reading from the N-terminus, the 158-residue chain is MAALVRISSLCHRGVSPLLFRPSSLIRPLAVQQKDHDCSYLISARIHATPSNYAGSGSKAATMHWTGERILSIALLSLAPVAYFCPSPAVDYSLAAALTLHGHWGLGQVVTDYVHGDAKIKMANAGLFVLSTVTFAGLCYFNYHDVGICKAVALLWSK.

Residues 1–29 (MAALVRISSLCHRGVSPLLFRPSSLIRPL) constitute a mitochondrion transit peptide. Over 30–62 (AVQQKDHDCSYLISARIHATPSNYAGSGSKAAT) the chain is Mitochondrial matrix. Residues 63–84 (MHWTGERILSIALLSLAPVAYF) traverse the membrane as a helical segment. Topologically, residues 85 to 89 (CPSPA) are mitochondrial intermembrane. The helical transmembrane segment at 90 to 110 (VDYSLAAALTLHGHWGLGQVV) threads the bilayer. Position 101 (histidine 101) interacts with heme b. At 111-119 (TDYVHGDAK) the chain is on the mitochondrial matrix side. Residue tyrosine 113 coordinates a ubiquinone. Residues 120–141 (IKMANAGLFVLSTVTFAGLCYF) form a helical membrane-spanning segment. The Mitochondrial intermembrane portion of the chain corresponds to 142-158 (NYHDVGICKAVALLWSK).

This sequence belongs to the CybS family. As to quaternary structure, component of complex II composed of four subunits: the flavoprotein (FP) SDHA, iron-sulfur protein (IP) SDHB, and a cytochrome b560 composed of SDHC and SDHD.

It localises to the mitochondrion inner membrane. The protein operates within carbohydrate metabolism; tricarboxylic acid cycle. Membrane-anchoring subunit of succinate dehydrogenase (SDH) that is involved in complex II of the mitochondrial electron transport chain and is responsible for transferring electrons from succinate to ubiquinone (coenzyme Q). SDH also oxidizes malate to the non-canonical enol form of oxaloacetate, enol-oxaloacetate. Enol-oxaloacetate, which is a potent inhibitor of the succinate dehydrogenase activity, is further isomerized into keto-oxaloacetate. This Danio rerio (Zebrafish) protein is Succinate dehydrogenase [ubiquinone] cytochrome b small subunit B, mitochondrial (sdhdb).